The chain runs to 346 residues: Histidinol-phosphate aminotransferase (346 aa).

Lys-209 bears the N6-(pyridoxal phosphate)lysine mark.

Belongs to the class-II pyridoxal-phosphate-dependent aminotransferase family. Histidinol-phosphate aminotransferase subfamily. As to quaternary structure, homodimer. The cofactor is pyridoxal 5'-phosphate.

The catalysed reaction is L-histidinol phosphate + 2-oxoglutarate = 3-(imidazol-4-yl)-2-oxopropyl phosphate + L-glutamate. Its pathway is amino-acid biosynthesis; L-histidine biosynthesis; L-histidine from 5-phospho-alpha-D-ribose 1-diphosphate: step 7/9. The polypeptide is Histidinol-phosphate aminotransferase (Vibrio campbellii (strain ATCC BAA-1116)).